The sequence spans 642 residues: 1-deoxy-D-xylulose-5-phosphate synthase 2 (642 aa).

Residues His-79 and 120 to 122 (AHS) each bind thiamine diphosphate. Asp-155 provides a ligand contact to Mg(2+). Thiamine diphosphate is bound by residues 156–157 (GS), Asn-184, Tyr-293, and Glu-375. Asn-184 is a binding site for Mg(2+).

Belongs to the transketolase family. DXPS subfamily. Homodimer. The cofactor is Mg(2+). Thiamine diphosphate is required as a cofactor.

The catalysed reaction is D-glyceraldehyde 3-phosphate + pyruvate + H(+) = 1-deoxy-D-xylulose 5-phosphate + CO2. It functions in the pathway metabolic intermediate biosynthesis; 1-deoxy-D-xylulose 5-phosphate biosynthesis; 1-deoxy-D-xylulose 5-phosphate from D-glyceraldehyde 3-phosphate and pyruvate: step 1/1. Catalyzes the acyloin condensation reaction between C atoms 2 and 3 of pyruvate and glyceraldehyde 3-phosphate to yield 1-deoxy-D-xylulose-5-phosphate (DXP). The sequence is that of 1-deoxy-D-xylulose-5-phosphate synthase 2 from Roseobacter denitrificans (strain ATCC 33942 / OCh 114) (Erythrobacter sp. (strain OCh 114)).